Here is a 387-residue protein sequence, read N- to C-terminus: Phosphoglycerate kinase (387 aa).

Residues 21–23 (DLN), Arg36, 59–62 (HLGR), Arg113, and Arg146 each bind substrate. Residues Lys197, Glu314, and 340-343 (GGDT) each bind ATP.

The protein belongs to the phosphoglycerate kinase family. In terms of assembly, monomer.

Its subcellular location is the cytoplasm. The enzyme catalyses (2R)-3-phosphoglycerate + ATP = (2R)-3-phospho-glyceroyl phosphate + ADP. Its pathway is carbohydrate degradation; glycolysis; pyruvate from D-glyceraldehyde 3-phosphate: step 2/5. This Pectobacterium carotovorum subsp. carotovorum (strain PC1) protein is Phosphoglycerate kinase.